A 227-amino-acid chain; its full sequence is GFP-like non-fluorescent chromoprotein (227 aa).

Residues 63 to 65 (AYG) constitute a cross-link (5-imidazolinone (Ala-Gly)). 2,3-didehydrotyrosine is present on Tyr-64.

The protein belongs to the GFP family. As to quaternary structure, homotetramer. Post-translationally, contains a chromophore consisting of modified amino acid residues. The chromophore is formed by autocatalytic backbone condensation between Xaa-N and Gly-(N+2), and oxidation of Tyr-(N+1) to didehydrotyrosine. Maturation of the chromophore requires nothing other than molecular oxygen. The precise stereochemistry of the tyrosine has not been determined.

Functionally, non-fluorescent pigment protein that is mauve in color. The wild-type form is non-fluorescent. This chain is GFP-like non-fluorescent chromoprotein, found in Condylactis gigantea (Giant Caribbean anemone).